The following is a 446-amino-acid chain: Phosphoglucosamine mutase (446 aa).

S99 (phosphoserine intermediate) is an active-site residue. Mg(2+)-binding residues include S99, D242, D244, and D246. Position 99 is a phosphoserine (S99).

This sequence belongs to the phosphohexose mutase family. The cofactor is Mg(2+). In terms of processing, activated by phosphorylation.

It catalyses the reaction alpha-D-glucosamine 1-phosphate = D-glucosamine 6-phosphate. Catalyzes the conversion of glucosamine-6-phosphate to glucosamine-1-phosphate. This chain is Phosphoglucosamine mutase, found in Campylobacter curvus (strain 525.92).